The sequence spans 23 residues: Paralytic peptide 2 (23 aa).

The cysteines at positions 7 and 19 are disulfide-linked.

Belongs to the GBP/PSP1/paralytic peptide family. In terms of tissue distribution, hemolymph.

In terms of biological role, causes rapid, rigid paralysis when injected into Lepidopteran larvae. The physiological role may be to reduce hemolymph loss following injury and promote wound healing. This is Paralytic peptide 2 from Spodoptera exigua (Beet armyworm).